Here is a 439-residue protein sequence, read N- to C-terminus: Glutamate--tRNA ligase 2 (439 aa).

Residues 6-16 carry the 'HIGH' region motif; that stretch reads PSPTGDMHIGN. The 'KMSKS' region signature appears at 232–236; that stretch reads KMSKR. Lys-235 lines the ATP pocket.

Belongs to the class-I aminoacyl-tRNA synthetase family. Glutamate--tRNA ligase type 1 subfamily. As to quaternary structure, monomer.

The protein localises to the cytoplasm. The catalysed reaction is tRNA(Glu) + L-glutamate + ATP = L-glutamyl-tRNA(Glu) + AMP + diphosphate. Its function is as follows. Catalyzes the attachment of glutamate to tRNA(Glu) in a two-step reaction: glutamate is first activated by ATP to form Glu-AMP and then transferred to the acceptor end of tRNA(Glu). This chain is Glutamate--tRNA ligase 2, found in Helicobacter pylori (strain Shi470).